Here is a 447-residue protein sequence, read N- to C-terminus: N-succinylarginine dihydrolase (447 aa).

Substrate is bound by residues 19–28 (AGLSFGNEAS), Asn-110, and 137–138 (HR). The active site involves Glu-174. Arg-212 provides a ligand contact to substrate. The active site involves His-248. The substrate site is built by Asp-250 and Asn-359. The Nucleophile role is filled by Cys-365.

Belongs to the succinylarginine dihydrolase family. In terms of assembly, homodimer.

It carries out the reaction N(2)-succinyl-L-arginine + 2 H2O + 2 H(+) = N(2)-succinyl-L-ornithine + 2 NH4(+) + CO2. Its pathway is amino-acid degradation; L-arginine degradation via AST pathway; L-glutamate and succinate from L-arginine: step 2/5. In terms of biological role, catalyzes the hydrolysis of N(2)-succinylarginine into N(2)-succinylornithine, ammonia and CO(2). The protein is N-succinylarginine dihydrolase of Escherichia coli (strain SE11).